Here is a 520-residue protein sequence, read N- to C-terminus: UvrABC system protein C (520 aa).

The 79-residue stretch at 11–89 (EEPGCYQFKD…IKKYQPKYNI (79 aa)) folds into the GIY-YIG domain. The 36-residue stretch at 195 to 230 (QDLIYDLRKEMETFAAAEEYEKALVIRDRIAAIENL) folds into the UVR domain.

The protein belongs to the UvrC family. As to quaternary structure, interacts with UvrB in an incision complex.

The protein resides in the cytoplasm. The UvrABC repair system catalyzes the recognition and processing of DNA lesions. UvrC both incises the 5' and 3' sides of the lesion. The N-terminal half is responsible for the 3' incision and the C-terminal half is responsible for the 5' incision. The chain is UvrABC system protein C from Methanospirillum hungatei JF-1 (strain ATCC 27890 / DSM 864 / NBRC 100397 / JF-1).